The following is a 188-amino-acid chain: Inactive cysteine S-methyltransferase OspZ (188 aa).

The protein belongs to the NleE/OspZ family.

Its subcellular location is the secreted. The protein localises to the host cytoplasm. The protein resides in the host nucleus. Functionally, inactive effector protein: in contrast to other members of the family, does not have the ability to inhibit host cell NF-kappa-B activation. Probably lacks cysteine S-methyltransferase activity due to its inability to bind S-adenosyl-L-methionine at the C-terminus. The polypeptide is Inactive cysteine S-methyltransferase OspZ (Shigella flexneri).